The primary structure comprises 309 residues: Homoserine O-succinyltransferase (309 aa).

Residue C142 is the Acyl-thioester intermediate of the active site. Substrate is bound by residues K163 and S192. H235 (proton acceptor) is an active-site residue. E237 is an active-site residue. Residue R249 coordinates substrate.

The protein belongs to the MetA family. As to quaternary structure, homodimer.

Its subcellular location is the cytoplasm. It carries out the reaction L-homoserine + succinyl-CoA = O-succinyl-L-homoserine + CoA. Its pathway is amino-acid biosynthesis; L-methionine biosynthesis via de novo pathway; O-succinyl-L-homoserine from L-homoserine: step 1/1. In terms of biological role, transfers a succinyl group from succinyl-CoA to L-homoserine, forming succinyl-L-homoserine. The polypeptide is Homoserine O-succinyltransferase (Escherichia coli O157:H7).